We begin with the raw amino-acid sequence, 505 residues long: tRNA-2-methylthio-N(6)-dimethylallyladenosine synthase (505 aa).

Positions 14 to 132 (RTYEVRTYGC…LPVLLERARV (119 aa)) constitute an MTTase N-terminal domain. Positions 23, 61, 95, 169, 173, and 176 each coordinate [4Fe-4S] cluster. Residues 155–386 (RESAYAAWVS…ALQEEISWDE (232 aa)) form the Radical SAM core domain. Positions 388–456 (KKQVGRTLEL…PHHLLAEGAV (69 aa)) constitute a TRAM domain.

Belongs to the methylthiotransferase family. MiaB subfamily. In terms of assembly, monomer. It depends on [4Fe-4S] cluster as a cofactor.

It is found in the cytoplasm. The catalysed reaction is N(6)-dimethylallyladenosine(37) in tRNA + (sulfur carrier)-SH + AH2 + 2 S-adenosyl-L-methionine = 2-methylsulfanyl-N(6)-dimethylallyladenosine(37) in tRNA + (sulfur carrier)-H + 5'-deoxyadenosine + L-methionine + A + S-adenosyl-L-homocysteine + 2 H(+). In terms of biological role, catalyzes the methylthiolation of N6-(dimethylallyl)adenosine (i(6)A), leading to the formation of 2-methylthio-N6-(dimethylallyl)adenosine (ms(2)i(6)A) at position 37 in tRNAs that read codons beginning with uridine. The polypeptide is tRNA-2-methylthio-N(6)-dimethylallyladenosine synthase (Streptomyces coelicolor (strain ATCC BAA-471 / A3(2) / M145)).